We begin with the raw amino-acid sequence, 209 residues long: Protein lin-28 homolog A (209 aa).

The tract at residues 1–31 (MGSVSNQQFAGGCAKAAEKAPEEAPPDAARA) is disordered. G2 bears the N-acetylglycine mark. S3 carries the phosphoserine modification. The CSD domain maps to 39–112 (HGAGICKWFN…GLESIRVTGP (74 aa)). The interval 113–136 (GGVFCIGSERRPKGKNMQKRRSKG) is flexible linker. At S120 the chain carries Phosphoserine. 2 CCHC-type zinc fingers span residues 137-154 (DRCY…ECKL) and 159-176 (KKCH…SCPL). Residues 177-209 (KAQQGPSSQGKPAYFREEEEEIHSPALLPEAQN) form a disordered region. At S200 the chain carries Phosphoserine.

Belongs to the lin-28 family. In terms of assembly, monomer. During skeletal muscle differentiation, associated with translation initiation complexes in the polysomal compartment. Directly interacts with EIF3S2. Interacts with NCL in an RNA-dependent manner. Interacts with TUT4 in the presence of pre-let-7 RNA. As to expression, expressed in embryonic stem cells (ES cells), spermatagonia and testis. Expressed in numerous epithelial tissues including the epithelia of the small intestine, the intralobular duct epithelium of the mammary gland and the epithelia of Henle's loop in the kidney and in the collecting duct (at protein level). Also expressed in the myocardium and skeletal muscle (at protein level).

Its subcellular location is the cytoplasm. It is found in the rough endoplasmic reticulum. The protein localises to the P-body. It localises to the stress granule. The protein resides in the nucleus. Its subcellular location is the nucleolus. Its function is as follows. RNA-binding protein that inhibits processing of pre-let-7 miRNAs and regulates translation of mRNAs that control developmental timing, pluripotency and metabolism. Seems to recognize a common structural G-quartet (G4) feature in its miRNA and mRNA targets. 'Translational enhancer' that drives specific mRNAs to polysomes and increases the efficiency of protein synthesis. Its association with the translational machinery and target mRNAs results in an increased number of initiation events per molecule of mRNA and, indirectly, in mRNA stabilization. Binds IGF2 mRNA, MYOD1 mRNA, ARBP/36B4 ribosomal protein mRNA and its own mRNA. Essential for skeletal muscle differentiation program through the translational up-regulation of IGF2 expression. Suppressor of microRNA (miRNA) biogenesis, including that of let-7, miR107, miR-143 and miR-200c. Specifically binds the miRNA precursors (pre-miRNAs), recognizing an 5'-GGAG-3' motif found in pre-miRNA terminal loop, and recruits TUT4 and TUT7 uridylyltransferaseS. This results in the terminal uridylation of target pre-miRNAs. Uridylated pre-miRNAs fail to be processed by Dicer and undergo degradation. The repression of let-7 expression is required for normal development and contributes to maintain the pluripotent state by preventing let-7-mediated differentiation of embryonic stem cells. Localized to the periendoplasmic reticulum area, binds to a large number of spliced mRNAs and inhibits the translation of mRNAs destined for the ER, reducing the synthesis of transmembrane proteins, ER or Golgi lumen proteins, and secretory proteins. Binds to and enhances the translation of mRNAs for several metabolic enzymes, such as PFKP, PDHA1 or SDHA, increasing glycolysis and oxidative phosphorylation. Which, with the let-7 repression may enhance tissue repair in adult tissue. In Mus musculus (Mouse), this protein is Protein lin-28 homolog A (Lin28a).